The sequence spans 70 residues: Protein SlyX homolog (70 aa).

It belongs to the SlyX family.

The sequence is that of Protein SlyX homolog from Shewanella denitrificans (strain OS217 / ATCC BAA-1090 / DSM 15013).